A 540-amino-acid chain; its full sequence is Acrosin-binding protein (540 aa).

A signal peptide spans methionine 1 to alanine 24. A pro-ACR binding region spans residues glutamate 25 to phenylalanine 104. A propeptide spans glutamate 25 to arginine 272 (removed in mature form). A disordered region spans residues serine 181–phenylalanine 266. The span at leucine 195–glutamate 213 shows a compositional bias: basic and acidic residues. Over residues alanine 214 to leucine 241 the composition is skewed to acidic residues. Over residues glutamine 256–phenylalanine 266 the composition is skewed to polar residues. The tract at residues leucine 316–arginine 424 is pro-ACR binding.

In terms of assembly, binds pro-ACR. Does not bind the mature form of ACR. Binds pro-ACR. Does not bind mature form of ACR. In terms of processing, the N-terminus is blocked. Post-translationally, phosphorylated on Tyr residues in capacitated sperm. Synthesized as a 60-kDa precursor, the 32-kDa mature form is post-translationally produced by the removal of the N-terminal half of the precursor during sperm maturation in the testis and/or epididymis.

The protein localises to the cytoplasmic vesicle. It is found in the secretory vesicle. It localises to the acrosome. Its function is as follows. Acrosomal protein that maintains proacrosin (pro-ACR) as an enzymatically inactive zymogen in the acrosome. Involved also in the acrosome formation. Maintains pro-ACR as an enzymatically inactive zymogen in the acrosome until acrosomal exocytosis. Partially also contributes to the assembly of acrosomal proteins to form an acrosomal granule. Functionally, rodent specific isoform that participates in the formation of the acrosomal granule into the center of the acrosomal vesicle during early spermiogenesis. In the fertilization process promotes ACR release from the acrosome during acrosomal exocytosis. This chain is Acrosin-binding protein, found in Rattus norvegicus (Rat).